A 75-amino-acid polypeptide reads, in one-letter code: UPF0235 protein Mflv_3569 (75 aa).

It belongs to the UPF0235 family.

The polypeptide is UPF0235 protein Mflv_3569 (Mycolicibacterium gilvum (strain PYR-GCK) (Mycobacterium gilvum (strain PYR-GCK))).